The chain runs to 241 residues: MRHQQTERQDPSQPLSRQHGTYRQIFHPEQLITGKEDAANNYAWGHYTIGKEFIDLLLDRIRKLADQCTGLQGFLVFHSLGRGTGSDVTSFLMEWLSVNYGKKSKLGFSIYPAPQVSTAMVQPYNSILTTHTTLEHSDCAFMVDNKAIYDICHCNLDIERPTYTNLNRLISQIVSSITASLRFDGALNVDLTEFQTNLVSYLTSTSPWPPMHQSSLQKRYTTSSCWWQRLPMPALSLPTRW.

Residues 1–10 (MRHQQTERQD) are compositionally biased toward basic and acidic residues. The interval 1–20 (MRHQQTERQDPSQPLSRQHG) is disordered. Asp10 lines the GTP pocket. A Mg(2+)-binding site is contributed by Asp10. Over residues 11–20 (PSQPLSRQHG) the composition is skewed to polar residues. Residues Ser79, Gly83, Thr84, Thr118, Asn145, and Asn167 each contribute to the GTP site. The active site involves Glu193.

This sequence belongs to the tubulin family. The cofactor is Mg(2+). Post-translationally, some glutamate residues at the C-terminus are polyglutamylated, resulting in polyglutamate chains on the gamma-carboxyl group. Polyglutamylation plays a key role in microtubule severing by spastin (SPAST). SPAST preferentially recognizes and acts on microtubules decorated with short polyglutamate tails: severing activity by SPAST increases as the number of glutamates per tubulin rises from one to eight, but decreases beyond this glutamylation threshold. Glutamylation is also involved in cilia motility. In terms of processing, some glutamate residues at the C-terminus are monoglycylated but not polyglycylated due to the absence of functional TTLL10 in human. Monoglycylation is mainly limited to tubulin incorporated into cilia and flagella axonemes, which is required for their stability and maintenance. Flagella glycylation controls sperm motility. Both polyglutamylation and monoglycylation can coexist on the same protein on adjacent residues, and lowering glycylation levels increases polyglutamylation, and reciprocally.

Its subcellular location is the cytoplasm. The protein resides in the cytoskeleton. The enzyme catalyses GTP + H2O = GDP + phosphate + H(+). Its function is as follows. Tubulin is the major constituent of microtubules, a cylinder consisting of laterally associated linear protofilaments composed ofalpha- and beta-tubulin heterodimers. This chain is Tubulin-like protein alpha-4B (TUBA4B), found in Homo sapiens (Human).